The primary structure comprises 362 residues: E3 ubiquitin-protein ligase TM129 (362 aa).

The Lumenal portion of the chain corresponds to 1 to 6; that stretch reads MDSPEV. A helical transmembrane segment spans residues 7-27; sequence TFTLAYLVFAVCFVFTPTEFH. At 28-56 the chain is on the cytoplasmic side; the sequence is SAGLTVQNLLSGWLGSEDAAFVPYHLRRT. The helical transmembrane segment at 57-77 threads the bilayer; the sequence is AATLLCHSLLPLGYYVGMCFA. Over 78 to 94 the chain is Lumenal; it reads ASEKQLYYPSQTPETWR. Residues 95 to 115 traverse the membrane as a helical segment; sequence AFLLLALMLPAIACTLIYYWS. At 116–362 the chain is on the cytoplasmic side; it reads RDHWACHPLA…FCVLDVCAVR (247 aa). The RING-type; degenerate zinc-finger motif lies at 285–350; sequence CIGCMQTQAS…ASRVPCPTCR (66 aa).

It belongs to the TMEM129 family. As to quaternary structure, integral component of ER-resident dislocation complexes.

Its subcellular location is the endoplasmic reticulum membrane. It carries out the reaction S-ubiquitinyl-[E2 ubiquitin-conjugating enzyme]-L-cysteine + [acceptor protein]-L-lysine = [E2 ubiquitin-conjugating enzyme]-L-cysteine + N(6)-ubiquitinyl-[acceptor protein]-L-lysine.. Its pathway is protein modification; protein ubiquitination. In terms of biological role, E3 ubiquitin-protein ligase involved in ER-associated protein degradation, preferentially associates with the E2 enzyme UBE2J2. Exploited by viral US11 proteins to mediate HLA class I proteins degradation. The protein is E3 ubiquitin-protein ligase TM129 (TMEM129) of Bos taurus (Bovine).